A 246-amino-acid chain; its full sequence is Complement C1q tumor necrosis factor-related protein 3 (246 aa).

An N-terminal signal peptide occupies residues 1–22; it reads MLGRQRIWWHLLPLLFLPFCLC. The Collagen-like domain occupies 51 to 113; it reads GYQGPPGPPG…KGEKGYPGVP (63 aa). Residues 53–112 are disordered; the sequence is QGPPGPPGPPGIPGNHGNNGNNGATGHEGAKGEKGDKGDLGPRGERGQHGPKGEKGYPGV. Residues 55–64 show a composition bias toward pro residues; the sequence is PPGPPGPPGI. Residues 65 to 74 are compositionally biased toward low complexity; it reads PGNHGNNGNN. Residues 80–107 are compositionally biased toward basic and acidic residues; that stretch reads EGAKGEKGDKGDLGPRGERGQHGPKGEK. The C1q domain maps to 113–246; that stretch reads PPELQIAFMA…FAGFLLFETK (134 aa).

The protein localises to the secreted. The polypeptide is Complement C1q tumor necrosis factor-related protein 3 (C1qtnf3) (Mus musculus (Mouse)).